Consider the following 188-residue polypeptide: dCTP deaminase (188 aa).

Residues 111–116, 135–137, Gln156, Tyr170, and Gln180 contribute to the dCTP site; these read KSTYAR and TLE. The active-site Proton donor/acceptor is the Glu137.

Belongs to the dCTP deaminase family. In terms of assembly, homotrimer.

It carries out the reaction dCTP + H2O + H(+) = dUTP + NH4(+). It functions in the pathway pyrimidine metabolism; dUMP biosynthesis; dUMP from dCTP (dUTP route): step 1/2. Its function is as follows. Catalyzes the deamination of dCTP to dUTP. The polypeptide is dCTP deaminase (Neisseria gonorrhoeae (strain ATCC 700825 / FA 1090)).